The primary structure comprises 147 residues: Ras-related protein RabK2 (147 aa).

GTP is bound by residues 11 to 15 and 63 to 66; these read NTHGS and TKSD. Cysteine 145 is lipidated: S-geranylgeranyl cysteine.

It belongs to the small GTPase superfamily. Rab family.

The protein resides in the cell membrane. This chain is Ras-related protein RabK2 (rabK2), found in Dictyostelium discoideum (Social amoeba).